The primary structure comprises 168 residues: uncharacterized protein (168 aa).

Transmembrane regions (helical) follow at residues 4-24 and 94-114; these read IIAL…PEEE and IMVG…GFAW.

To A.aeolicus aq_1446.

It localises to the cell membrane. This is an uncharacterized protein from Aquifex aeolicus (strain VF5).